The primary structure comprises 187 residues: Elongation factor P (187 aa).

Belongs to the elongation factor P family.

It localises to the cytoplasm. Its pathway is protein biosynthesis; polypeptide chain elongation. Its function is as follows. Involved in peptide bond synthesis. Stimulates efficient translation and peptide-bond synthesis on native or reconstituted 70S ribosomes in vitro. Probably functions indirectly by altering the affinity of the ribosome for aminoacyl-tRNA, thus increasing their reactivity as acceptors for peptidyl transferase. This is Elongation factor P from Rhodococcus opacus (strain B4).